Here is a 350-residue protein sequence, read N- to C-terminus: Small ribosomal subunit biogenesis GTPase RsgA (350 aa).

Polar residues predominate over residues Met-1–Asn-17. The interval Met-1–Thr-24 is disordered. The CP-type G domain maps to Thr-104–Phe-273. Residues Asn-160 to Asp-163 and Gly-214 to Ser-222 each bind GTP. Zn(2+)-binding residues include Cys-297, Cys-302, His-304, and Cys-310.

This sequence belongs to the TRAFAC class YlqF/YawG GTPase family. RsgA subfamily. As to quaternary structure, monomer. Associates with 30S ribosomal subunit, binds 16S rRNA. The cofactor is Zn(2+).

The protein localises to the cytoplasm. In terms of biological role, one of several proteins that assist in the late maturation steps of the functional core of the 30S ribosomal subunit. Helps release RbfA from mature subunits. May play a role in the assembly of ribosomal proteins into the subunit. Circularly permuted GTPase that catalyzes slow GTP hydrolysis, GTPase activity is stimulated by the 30S ribosomal subunit. The polypeptide is Small ribosomal subunit biogenesis GTPase RsgA (Salmonella schwarzengrund (strain CVM19633)).